The chain runs to 252 residues: Serine/threonine phosphatase stp (252 aa).

The segment covering 1–18 has biased composition (basic and acidic residues); the sequence is MHAEFRTDRGRIRHHNED. The segment at 1-23 is disordered; sequence MHAEFRTDRGRIRHHNEDNGGVF. Residues 2–242 form the PPM-type phosphatase domain; sequence HAEFRTDRGR…DNITVLLVER (241 aa). The Mn(2+) site is built by aspartate 36, glycine 37, aspartate 194, and aspartate 233.

Belongs to the PP2C family. The cofactor is Mn(2+).

Its subcellular location is the cytoplasm. It is found in the membrane. It catalyses the reaction O-phospho-L-seryl-[protein] + H2O = L-seryl-[protein] + phosphate. The catalysed reaction is O-phospho-L-threonyl-[protein] + H2O = L-threonyl-[protein] + phosphate. Functionally, protein phosphatase that dephosphorylates EF-Tu. This chain is Serine/threonine phosphatase stp (stp), found in Listeria welshimeri serovar 6b (strain ATCC 35897 / DSM 20650 / CCUG 15529 / CIP 8149 / NCTC 11857 / SLCC 5334 / V8).